Consider the following 179-residue polypeptide: Large ribosomal subunit protein uL5 (179 aa).

This sequence belongs to the universal ribosomal protein uL5 family. Part of the 50S ribosomal subunit; part of the 5S rRNA/L5/L18/L25 subcomplex. Contacts the 5S rRNA and the P site tRNA. Forms a bridge to the 30S subunit in the 70S ribosome.

In terms of biological role, this is one of the proteins that bind and probably mediate the attachment of the 5S RNA into the large ribosomal subunit, where it forms part of the central protuberance. In the 70S ribosome it contacts protein S13 of the 30S subunit (bridge B1b), connecting the 2 subunits; this bridge is implicated in subunit movement. Contacts the P site tRNA; the 5S rRNA and some of its associated proteins might help stabilize positioning of ribosome-bound tRNAs. In Vibrio cholerae serotype O1 (strain ATCC 39541 / Classical Ogawa 395 / O395), this protein is Large ribosomal subunit protein uL5.